A 282-amino-acid chain; its full sequence is Snake venom serine protease BmSP (282 aa).

The N-terminal stretch at 1 to 18 (MVLIGVLASLLILQLSYS) is a signal peptide. A propeptide spanning residues 19–56 (KSLDDGAKESAYDDEIQQSSWGNSTVNTTLTETVVIQL) is cleaved from the precursor. N-linked (GlcNAc...) asparagine glycosylation is found at Asn-41 and Asn-45. Residues 57–280 (IMGGSECYKS…YIDWIKGIIA (224 aa)) enclose the Peptidase S1 domain. Disulfide bonds link Cys-63–Cys-195, Cys-82–Cys-98, Cys-174–Cys-241, Cys-206–Cys-220, and Cys-231–Cys-256. The active-site Charge relay system is His-97. N-linked (GlcNAc...) asparagine glycosylation is present at Asn-135. Asp-142 serves as the catalytic Charge relay system. 2 N-linked (GlcNAc...) asparagine glycosylation sites follow: Asn-149 and Asn-153. Ser-235 (charge relay system) is an active-site residue.

Belongs to the peptidase S1 family. Snake venom subfamily. Monomer. As to expression, expressed by the venom gland.

It is found in the secreted. Snake venom serine protease that may act in the hemostasis system of the prey. In Bungarus multicinctus (Many-banded krait), this protein is Snake venom serine protease BmSP.